A 955-amino-acid polypeptide reads, in one-letter code: MGCPGWPLALFALLLASCSGGPSGVSSPAPCPAPCACDLDGGADCSGKGLVTVPDGLSVFTHSLDLSMNNITKLPEGAFKGFPYLEELRLAGNDLSIIHPMALSGLKELKVLTLQNNQLKTVPSESLKGLVSLQSLRLDANHIVTVPEDSFEGLVQLRHLWLDDNSLTEVPIRPLSNLPSLQALTLALNKISHIPDYAFSNLSSLVVLHLHNNKIRTLGPHCFHGLDNLEALDLNYNNLIDFPDSIRSLPNLKELGFHSNSITIIPDGAFVKNPLLRTIHLYDNPLSFVGNSAFQNLSDLHFLIIRGASNVQWFPNLTGTNNLESLTLTGTKIRSIPIKFCQEQKMLRTLDLSYNEISALVGFEGCSSLEEVYLQNNQIQEVQNETFQGLAALRMLDLSRNRIHTIHKEAFVTLKALTNLDLSFNDLTAFPTAGLHGLNQLKLTGNPNFKETLTAKDLIKLSSVSVPYAYQCCAFSACNSYMTTTVEEDRLRAQRLLLDHDRAAMDPDYMGTEDDKEHVQALIQCNPATGPFKPCEYLLGSWMIRLTVWFIFLLALIFNVIVIVTMFASCSQLTSSKLFIGLIAVSNLFMGVYTGTLTVLDTISWGQFAEFGIWWETGNGCKVAGFLAIFSSESAIFFLMLAAIERSLSAKDIIKKEKHQHLRKFQVASLLAVLLAAAAGCLPLFHIGEFSSSPLCLPFPTGETPSLGFTVTLVLLNSLAFLIMVITYTKLYCTIEKEDLSENAESSMIKHVAWLIFTNCIFFCPVAFFSFAPLITAIYISPEIMKSVTLIFLPLPACLNPVLYVFFNPKFKEDWKLLRWRLTKRSGSVAVATNSQRGCVTQDFYYDFGMYSHLQGGNFAVCDYCESVLLKNPPPCKHLIKSHSCPTLAVVPCQRPDNYWSEFGTQSAHSDCADEEDSFVSDSSDQVQVCGRACFYQSRGLPLVRYAYNIPRMKD.

A signal peptide spans 1–21 (MGCPGWPLALFALLLASCSGG). The Extracellular portion of the chain corresponds to 22–547 (PSGVSSPAPC…LLGSWMIRLT (526 aa)). The region spanning 26–59 (SSPAPCPAPCACDLDGGADCSGKGLVTVPDGLSV) is the LRRNT domain. Disulfide bonds link C31-C37 and C35-C45. LRR repeat units follow at residues 57–81 (LSVF…AFKG), 83–105 (PYLE…ALSG), 106–129 (LKEL…SLKG), 131–153 (VSLQ…SFEG), 155–177 (VQLR…PLSN), 178–201 (LPSL…AFSN), 203–225 (SSLV…CFHG), 226–249 (LDNL…IRSL), 250–272 (PNLK…AFVK), and 274–296 (PLLR…AFQN). N-linked (GlcNAc...) asparagine glycosylation is present at N201. N-linked (GlcNAc...) asparagine glycosylation is found at N296 and N316. 5 LRR repeats span residues 320 to 343 (TNNL…FCQE), 345 to 365 (KMLR…GFEG), 366 to 389 (CSSL…TFQG), 390 to 413 (LAAL…AFVT), and 415 to 437 (KALT…GLHG). An intrachain disulfide couples C341 to C366. N384 carries N-linked (GlcNAc...) asparagine glycosylation. 2 disulfides stabilise this stretch: C472-C525 and C473-C478. Residues 548-568 (VWFIFLLALIFNVIVIVTMFA) form a helical membrane-spanning segment. Residues 569 to 578 (SCSQLTSSKL) lie on the Cytoplasmic side of the membrane. A helical membrane pass occupies residues 579–599 (FIGLIAVSNLFMGVYTGTLTV). Residues 600 to 623 (LDTISWGQFAEFGIWWETGNGCKV) are Extracellular-facing. Residues C621 and C696 are joined by a disulfide bond. The helical transmembrane segment at 624–644 (AGFLAIFSSESAIFFLMLAAI) threads the bilayer. Topologically, residues 645–666 (ERSLSAKDIIKKEKHQHLRKFQ) are cytoplasmic. The chain crosses the membrane as a helical span at residues 667–687 (VASLLAVLLAAAAGCLPLFHI). Over 688–706 (GEFSSSPLCLPFPTGETPS) the chain is Extracellular. Residues 707 to 727 (LGFTVTLVLLNSLAFLIMVIT) form a helical membrane-spanning segment. Residues 728–759 (YTKLYCTIEKEDLSENAESSMIKHVAWLIFTN) are Cytoplasmic-facing. The helical transmembrane segment at 760–780 (CIFFCPVAFFSFAPLITAIYI) threads the bilayer. The Extracellular portion of the chain corresponds to 781–786 (SPEIMK). Residues 787–807 (SVTLIFLPLPACLNPVLYVFF) traverse the membrane as a helical segment. Over 808–955 (NPKFKEDWKL…YAYNIPRMKD (148 aa)) the chain is Cytoplasmic.

It belongs to the G-protein coupled receptor 1 family.

The protein localises to the cell membrane. Receptor for R-spondins that potentiates the canonical Wnt signaling pathway and is involved in the formation of various organs. Upon binding to R-spondins (RSPO1, RSPO2, RSPO3 or RSPO4), associates with phosphorylated LRP6 and frizzled receptors that are activated by extracellular Wnt receptors, triggering the canonical Wnt signaling pathway to increase expression of target genes. In contrast to classical G-protein coupled receptors, does not activate heterotrimeric G-proteins to transduce the signal. Its function as activator of the Wnt signaling pathway is required for the development of various organs, including liver, kidney, intestine, bone, reproductive tract and eye. May play a role in regulating the circadian rhythms of plasma lipids. Required for proper development of GnRH neurons (gonadotropin-releasing hormone expressing neurons) that control the release of reproductive hormones from the pituitary gland. The polypeptide is Leucine-rich repeat-containing G-protein coupled receptor 4 (lgr4) (Xenopus tropicalis (Western clawed frog)).